Reading from the N-terminus, the 241-residue chain is 3-deoxy-D-manno-octulosonic acid kinase (241 aa).

Asp-171 is a catalytic residue.

It belongs to the protein kinase superfamily. KdkA/RfaP family.

The protein localises to the cell inner membrane. It carries out the reaction an alpha-Kdo-(2-&gt;6)-lipid IVA + ATP = a 4-O-phospho-alpha-Kdo-(2-&gt;6)-lipid IVA + ADP + H(+). It functions in the pathway bacterial outer membrane biogenesis; LPS core biosynthesis. In terms of biological role, catalyzes the ATP-dependent phosphorylation of the 3-deoxy-D-manno-octulosonic acid (Kdo) residue in Kdo-lipid IV(A) at the 4-OH position. This Haemophilus influenzae (strain 86-028NP) protein is 3-deoxy-D-manno-octulosonic acid kinase.